A 246-amino-acid chain; its full sequence is 1-(5-phosphoribosyl)-5-[(5-phosphoribosylamino)methylideneamino] imidazole-4-carboxamide isomerase (246 aa).

D7 functions as the Proton acceptor in the catalytic mechanism. D129 acts as the Proton donor in catalysis.

Belongs to the HisA/HisF family.

It localises to the cytoplasm. The enzyme catalyses 1-(5-phospho-beta-D-ribosyl)-5-[(5-phospho-beta-D-ribosylamino)methylideneamino]imidazole-4-carboxamide = 5-[(5-phospho-1-deoxy-D-ribulos-1-ylimino)methylamino]-1-(5-phospho-beta-D-ribosyl)imidazole-4-carboxamide. It participates in amino-acid biosynthesis; L-histidine biosynthesis; L-histidine from 5-phospho-alpha-D-ribose 1-diphosphate: step 4/9. The polypeptide is 1-(5-phosphoribosyl)-5-[(5-phosphoribosylamino)methylideneamino] imidazole-4-carboxamide isomerase (Shewanella sediminis (strain HAW-EB3)).